The chain runs to 73 residues: N-terminal-borealin-like protein (73 aa).

This sequence belongs to the borealin family. As to quaternary structure, component of the aurora kinase complex composed of at least BIR1, BNL1, IPL1 and SLI15.

It is found in the nucleus. The protein localises to the cytoplasm. Its subcellular location is the cytoskeleton. The protein resides in the spindle. In terms of biological role, component of the aurora kinase complex, also called chromosomal passenger complex (CPC), essential for chromosome segregation and metaphase chromosome alignment. Mediates the SLI15-BIR1 interaction within the CPC. The sequence is that of N-terminal-borealin-like protein (NBL1) from Saccharomyces cerevisiae (strain ATCC 204508 / S288c) (Baker's yeast).